We begin with the raw amino-acid sequence, 580 residues long: Arginine--tRNA ligase (580 aa).

A 'HIGH' region motif is present at residues 131 to 141 (ANPTGPMHVGH).

The protein belongs to the class-I aminoacyl-tRNA synthetase family. Monomer.

Its subcellular location is the cytoplasm. It carries out the reaction tRNA(Arg) + L-arginine + ATP = L-arginyl-tRNA(Arg) + AMP + diphosphate. The chain is Arginine--tRNA ligase from Cereibacter sphaeroides (strain ATCC 17023 / DSM 158 / JCM 6121 / CCUG 31486 / LMG 2827 / NBRC 12203 / NCIMB 8253 / ATH 2.4.1.) (Rhodobacter sphaeroides).